Consider the following 349-residue polypeptide: MRVADFSFELPDSLIARHPLAERHGSRLLVLDGPTGALAHRQFPDLLDYLRPGDLMVFNNTRVIPARLFGQKASGGKLEVLVERVLDSHRVLAHVRASKAPKVGAVILIDGGGEAEMVARHDTLFELRFTEEVLPLLDRVGHMPLPPYIDRPDEGADRERYQTVYAQRAGAVAAPTAGLHFDEALLEKIADKGVERAFVTLHVGAGTFQPVRVDKIEDHHMHKEWLEVGQDVVDAIEACRARGGRVIAVGTTSVRSLESAARDGVLKAFSGDTDIFIYPGRPFHVVDALVTNFHLPESTLLMLVSAFAGYPETMAAYAAAVEHGYRFFSYGDAMFITRNPAPRGPEDQA.

This sequence belongs to the QueA family. In terms of assembly, monomer.

Its subcellular location is the cytoplasm. The catalysed reaction is 7-aminomethyl-7-carbaguanosine(34) in tRNA + S-adenosyl-L-methionine = epoxyqueuosine(34) in tRNA + adenine + L-methionine + 2 H(+). It functions in the pathway tRNA modification; tRNA-queuosine biosynthesis. In terms of biological role, transfers and isomerizes the ribose moiety from AdoMet to the 7-aminomethyl group of 7-deazaguanine (preQ1-tRNA) to give epoxyqueuosine (oQ-tRNA). This Pseudomonas putida (strain ATCC 700007 / DSM 6899 / JCM 31910 / BCRC 17059 / LMG 24140 / F1) protein is S-adenosylmethionine:tRNA ribosyltransferase-isomerase.